Consider the following 649-residue polypeptide: MLTTESPTTTTTTTTTTTSSPSSDIRDKFIFGNLEVKVKEVKGCQLHFLNVKCELALKKTEIKTKPLANHTFFDVFSFRVSAATSELEIEAWKKNFLFKDKMTGSLTIPINDLLHANGEAKWYPLSNKKPRSSRVKKENITNSNNKDNNTASPSSPDEAQEKGDEDQHHSADESPAEETSPTTGRPRSVSMPAKKVKAAPEICLEIKFVLNEPPKEVLKGIVLDGVWNSENNFGSLINNPHWIKCTQYLLSIKDEITPITLKLRQPEGTDQRCSFFVINYDPFYNGSKKVILDTTNDIKKVSSFNSPIPATSVDCKIDLEPGQYCIIPYAESFAFSGTYKFNLDSEKLDNCEFYALPKSQEQAWNEITVDGLWTTATNGGGDINILGWTKNPQYSFTLTKKSRACVLLSQDDNDKSVGFYVIKQLDAGKRAIEFREQVGKTESFKFSCSTGCTLTLDEGTYIVIPSTYDHGIEGAFHLTLFTDDKNATFQPLTNAFQEVEQVKGTWVGKSAGGSPNQPTFFNNPQFHLKVPASDKDEVIAVQLIQDSTIADEGIGFIVLSRDSHSEPLTAQDFQNEMVFTKTSNWEKRNDIVCRLHVKPESPREFTIIPSTFDPSVNRSFKLQVYSDVSISLDEIEQKDESSDSEQNDD.

Residues 1 to 3 (MLT) constitute a propeptide that is removed on maturation. 2 disordered regions span residues 1-22 (MLTT…SSPS) and 124-193 (PLSN…SMPA). Residues 15–123 (TTTTSSPSSD…LHANGEAKWY (109 aa)) enclose the C2 domain. The segment covering 140–149 (ITNSNNKDNN) has biased composition (low complexity). Residues 159-172 (AQEKGDEDQHHSAD) show a composition bias toward basic and acidic residues. 2 domain III regions span residues 458–489 (EGTY…NATF) and 498–633 (EVEQ…ISLD).

It belongs to the peptidase C2 family. Monomer. Post-translationally, undergoes autolytic cleavage between Pro-192 and Ala-193.

It is found in the cytoplasm. Its subcellular location is the cytosol. Functionally, has a weak caseinolytic activity. This chain is Putative calpain-like cysteine protease A (cplA), found in Dictyostelium discoideum (Social amoeba).